We begin with the raw amino-acid sequence, 282 residues long: Putative 4-diphosphocytidyl-2-C-methyl-D-erythritol kinase (282 aa).

K9 is an active-site residue. Residue 93 to 103 (PVSAGLAGGST) participates in ATP binding. D135 is an active-site residue.

This sequence belongs to the GHMP kinase family. IspE subfamily.

The catalysed reaction is 4-CDP-2-C-methyl-D-erythritol + ATP = 4-CDP-2-C-methyl-D-erythritol 2-phosphate + ADP + H(+). In terms of biological role, catalyzes the phosphorylation of the position 2 hydroxy group of 4-diphosphocytidyl-2C-methyl-D-erythritol. In Staphylococcus saprophyticus subsp. saprophyticus (strain ATCC 15305 / DSM 20229 / NCIMB 8711 / NCTC 7292 / S-41), this protein is Putative 4-diphosphocytidyl-2-C-methyl-D-erythritol kinase.